An 837-amino-acid chain; its full sequence is Protein translocase subunit SecA (837 aa).

ATP is bound by residues Q87, 105-109, and D494; that span reads GEGKT. The tract at residues 788-837 is disordered; sequence HKESKSDLEYSDSENTETKKKPKRRSEPKVGRNDPCPCGSGKKYKKCCGK. Zn(2+)-binding residues include C823, C825, C834, and C835.

Belongs to the SecA family. As to quaternary structure, monomer and homodimer. Part of the essential Sec protein translocation apparatus which comprises SecA, SecYEG and auxiliary proteins SecDF-YajC and YidC. Zn(2+) is required as a cofactor.

Its subcellular location is the cell inner membrane. It is found in the cytoplasm. It carries out the reaction ATP + H2O + cellular proteinSide 1 = ADP + phosphate + cellular proteinSide 2.. Its function is as follows. Part of the Sec protein translocase complex. Interacts with the SecYEG preprotein conducting channel. Has a central role in coupling the hydrolysis of ATP to the transfer of proteins into and across the cell membrane, serving as an ATP-driven molecular motor driving the stepwise translocation of polypeptide chains across the membrane. The polypeptide is Protein translocase subunit SecA (Maridesulfovibrio salexigens (strain ATCC 14822 / DSM 2638 / NCIMB 8403 / VKM B-1763) (Desulfovibrio salexigens)).